Reading from the N-terminus, the 272-residue chain is Large ribosomal subunit protein uL2cz/uL2cy (272 aa).

Disordered regions lie at residues 1 to 33 and 220 to 272; these read MAIH…SGQR and VMNP…RRSK. An N-methylalanine modification is found at Ala2. Positions 7-30 are enriched in polar residues; sequence KTSTSSTRNGAVQVKSNPRNNLIS.

Belongs to the universal ribosomal protein uL2 family. Component of the chloroplast large ribosomal subunit (LSU). Mature 70S chloroplast ribosomes of higher plants consist of a small (30S) and a large (50S) subunit. The 30S small subunit contains 1 molecule of ribosomal RNA (16S rRNA) and 24 different proteins. The 50S large subunit contains 3 rRNA molecules (23S, 5S and 4.5S rRNA) and 33 different proteins.

It is found in the plastid. Its subcellular location is the chloroplast. Its function is as follows. Component of the chloroplast ribosome (chloro-ribosome), a dedicated translation machinery responsible for the synthesis of chloroplast genome-encoded proteins, including proteins of the transcription and translation machinery and components of the photosynthetic apparatus. The sequence is that of Large ribosomal subunit protein uL2cz/uL2cy (rpl2-A) from Spinacia oleracea (Spinach).